An 854-amino-acid polypeptide reads, in one-letter code: pH-response regulator protein palA/prr-1 (854 aa).

In terms of domain architecture, BRO1 spans 5 to 402 (HVLSLPFRKS…SELESMTSQL (398 aa)). Positions 632–699 (RLDRLYESEL…DAAYYKYKEI (68 aa)) form a coiled coil. Disordered regions lie at residues 739–782 (EEEI…EPIQ) and 801–854 (PQQQ…IRFG). Over residues 746–759 (PLSSLNMHQSSFSY) the composition is skewed to polar residues. Over residues 767 to 782 (QPPPPPPQIPFPEPIQ) the composition is skewed to pro residues. Low complexity predominate over residues 827-839 (QGQQHQQEQGQPG).

It belongs to the palA/RIM20 family. In terms of assembly, interacts with pacc-1 by binding to its two YPX[LI] motifs.

Functionally, required for the proteolytic cleavage of the transcription factor pacc-1 in response to alkaline ambient pH. May act as a scaffold protein that recruits the calpain-like protease palB/cpr-8 via snf7/vps-3 to its substrate pacc-1. The polypeptide is pH-response regulator protein palA/prr-1 (prr-1) (Neurospora crassa (strain ATCC 24698 / 74-OR23-1A / CBS 708.71 / DSM 1257 / FGSC 987)).